The sequence spans 94 residues: Integration host factor subunit beta (94 aa).

The protein belongs to the bacterial histone-like protein family. Heterodimer of an alpha and a beta chain.

In terms of biological role, this protein is one of the two subunits of integration host factor, a specific DNA-binding protein that functions in genetic recombination as well as in transcriptional and translational control. The protein is Integration host factor subunit beta of Escherichia coli O127:H6 (strain E2348/69 / EPEC).